A 220-amino-acid polypeptide reads, in one-letter code: Flavin-dependent thymidylate synthase (220 aa).

In terms of domain architecture, ThyX spans 1–208 (MKIDILDKGF…PWTFEAFLKY (208 aa)). FAD-binding positions include Thr-55, 78–80 (RHR), and Glu-86. Residues 75 to 78 (QWFR), 86 to 90 (ELSGR), and Arg-147 each bind dUMP. Positions 78–88 (RHRIASYNELS) match the ThyX motif motif. Residues 163 to 165 (NAR) and Asn-169 contribute to the FAD site. Residue Arg-174 participates in dUMP binding. Residue Arg-174 is the Involved in ionization of N3 of dUMP, leading to its activation of the active site.

This sequence belongs to the thymidylate synthase ThyX family. As to quaternary structure, homotetramer. It depends on FAD as a cofactor.

It catalyses the reaction dUMP + (6R)-5,10-methylene-5,6,7,8-tetrahydrofolate + NADPH + H(+) = dTMP + (6S)-5,6,7,8-tetrahydrofolate + NADP(+). The protein operates within pyrimidine metabolism; dTTP biosynthesis. Functionally, catalyzes the reductive methylation of 2'-deoxyuridine-5'-monophosphate (dUMP) to 2'-deoxythymidine-5'-monophosphate (dTMP) while utilizing 5,10-methylenetetrahydrofolate (mTHF) as the methyl donor, and NADPH and FADH(2) as the reductant. The protein is Flavin-dependent thymidylate synthase of Thermotoga sp. (strain RQ2).